Here is a 1485-residue protein sequence, read N- to C-terminus: Formin BNR1 (1485 aa).

Disordered regions lie at residues 65-88, 226-248, and 549-575; these read HLPPPRLDTDSESVSSRTSSPTLH, HDDSSTSKLSIESGGSSGAPTET, and ANTSLEEDELTPELEDNLSGTESSFDE. In terms of domain architecture, GBD/FH3 spans 110–636; that stretch reads NQIPPEEIVD…HVTNESRVIG (527 aa). Polar residues predominate over residues 231–248; it reads TSKLSIESGGSSGAPTET. Residues 553 to 564 are compositionally biased toward acidic residues; it reads LEEDELTPELED. The stretch at 660–734 forms a coiled coil; sequence ARRAVAESKM…EQLQSPNNTA (75 aa). Positions 746-874 are disordered; it reads GNGTVASLKD…GFMNASAPPP (129 aa). Residues 953–1368 enclose the FH2 domain; the sequence is VVPSIRPKNK…YEIRKKILED (416 aa). 2 coiled-coil regions span residues 1240–1312 and 1351–1382; these read HNIS…GELN and QREEEQRTYEIRKKILEDKIAKKEKLKEESAE. The disordered stretch occupies residues 1447–1471; sequence LKRRMTTRKRTTDGETSPKSEQFMS.

This sequence belongs to the formin homology family. BNI1 subfamily. In terms of assembly, interacts with IQG1.

The protein localises to the bud neck. It localises to the cell septum. Functionally, may organize microtubules by mediating spindle positioning and movement in the budding process. Required for cytokinesis and the maintenance of polarized hyphal growth. This is Formin BNR1 (BNR1) from Candida albicans (strain SC5314 / ATCC MYA-2876) (Yeast).